We begin with the raw amino-acid sequence, 370 residues long: Elongation factor Ts, mitochondrial (370 aa).

A mitochondrion-targeting transit peptide spans 1 to 29; that stretch reads MALLSAAPRALRLPRRLPLGAALPALRAL.

Belongs to the EF-Ts family.

Its subcellular location is the mitochondrion. Associates with the EF-Tu.GDP complex and induces the exchange of GDP to GTP. It remains bound to the aminoacyl-tRNA.EF-Tu.GTP complex up to the GTP hydrolysis stage on the ribosome. This is Elongation factor Ts, mitochondrial from Cryptococcus neoformans var. neoformans serotype D (strain B-3501A) (Filobasidiella neoformans).